The primary structure comprises 271 residues: Thiazole synthase (271 aa).

Lysine 95 functions as the Schiff-base intermediate with DXP in the catalytic mechanism. 1-deoxy-D-xylulose 5-phosphate is bound by residues glycine 156, 182–183, and 204–205; these read AG and NT.

Belongs to the ThiG family. In terms of assembly, homotetramer. Forms heterodimers with either ThiH or ThiS.

Its subcellular location is the cytoplasm. It catalyses the reaction [ThiS sulfur-carrier protein]-C-terminal-Gly-aminoethanethioate + 2-iminoacetate + 1-deoxy-D-xylulose 5-phosphate = [ThiS sulfur-carrier protein]-C-terminal Gly-Gly + 2-[(2R,5Z)-2-carboxy-4-methylthiazol-5(2H)-ylidene]ethyl phosphate + 2 H2O + H(+). The protein operates within cofactor biosynthesis; thiamine diphosphate biosynthesis. Catalyzes the rearrangement of 1-deoxy-D-xylulose 5-phosphate (DXP) to produce the thiazole phosphate moiety of thiamine. Sulfur is provided by the thiocarboxylate moiety of the carrier protein ThiS. In vitro, sulfur can be provided by H(2)S. This Yersinia pseudotuberculosis serotype O:3 (strain YPIII) protein is Thiazole synthase.